Here is a 357-residue protein sequence, read N- to C-terminus: 3-isopropylmalate dehydrogenase (357 aa).

Substrate is bound by residues Arg97, Arg107, Arg135, and Asp224. Residues Asp224, Asp248, and Asp252 each contribute to the Mg(2+) site. Position 282–294 (282–294) interacts with NAD(+); it reads GSAPDIAGQDLAN.

Belongs to the isocitrate and isopropylmalate dehydrogenases family. LeuB type 1 subfamily. As to quaternary structure, homodimer. Requires Mg(2+) as cofactor. Mn(2+) is required as a cofactor.

It localises to the cytoplasm. It catalyses the reaction (2R,3S)-3-isopropylmalate + NAD(+) = 4-methyl-2-oxopentanoate + CO2 + NADH. Its pathway is amino-acid biosynthesis; L-leucine biosynthesis; L-leucine from 3-methyl-2-oxobutanoate: step 3/4. Its function is as follows. Catalyzes the oxidation of 3-carboxy-2-hydroxy-4-methylpentanoate (3-isopropylmalate) to 3-carboxy-4-methyl-2-oxopentanoate. The product decarboxylates to 4-methyl-2 oxopentanoate. This Prochlorococcus marinus (strain MIT 9313) protein is 3-isopropylmalate dehydrogenase.